Here is a 559-residue protein sequence, read N- to C-terminus: DNA ligase (559 aa).

E247 serves as a coordination point for ATP. K249 (N6-AMP-lysine intermediate) is an active-site residue. R254, R269, E299, F339, R414, and K420 together coordinate ATP.

The protein belongs to the ATP-dependent DNA ligase family. In terms of assembly, monomer. Mg(2+) is required as a cofactor.

The enzyme catalyses ATP + (deoxyribonucleotide)n-3'-hydroxyl + 5'-phospho-(deoxyribonucleotide)m = (deoxyribonucleotide)n+m + AMP + diphosphate.. The catalysed reaction is NAD(+) + (deoxyribonucleotide)n-3'-hydroxyl + 5'-phospho-(deoxyribonucleotide)m = (deoxyribonucleotide)n+m + AMP + beta-nicotinamide D-nucleotide.. Its function is as follows. DNA ligase that seals nicks in double-stranded DNA during DNA replication, DNA recombination and DNA repair. Can also use NAD, but less efficiently than ATP. The chain is DNA ligase from Thermococcus kodakarensis (strain ATCC BAA-918 / JCM 12380 / KOD1) (Pyrococcus kodakaraensis (strain KOD1)).